Here is a 512-residue protein sequence, read N- to C-terminus: GMP synthase [glutamine-hydrolyzing] (512 aa).

The Glutamine amidotransferase type-1 domain maps to 7–197; sequence TIIVLDFGSQ…VFGVCGCSEG (191 aa). Cysteine 84 (nucleophile) is an active-site residue. Catalysis depends on residues histidine 171 and glutamate 173. Positions 198-387 constitute a GMPS ATP-PPase domain; sequence WNMENFIEVE…LGIPDEIVWR (190 aa). Residue 225–231 participates in ATP binding; that stretch reads SGGVDSS.

Homodimer.

The catalysed reaction is XMP + L-glutamine + ATP + H2O = GMP + L-glutamate + AMP + diphosphate + 2 H(+). It functions in the pathway purine metabolism; GMP biosynthesis; GMP from XMP (L-Gln route): step 1/1. Catalyzes the synthesis of GMP from XMP. This chain is GMP synthase [glutamine-hydrolyzing], found in Bacillus cereus (strain ATCC 10987 / NRS 248).